We begin with the raw amino-acid sequence, 411 residues long: Elongation factor 1-gamma (411 aa).

Residues 3 to 84 (LTLWSGVNPE…HIARLDRSGG (82 aa)) form the GST N-terminal domain. The 127-residue stretch at 90 to 216 (TPLEGSQVDM…QGATFGAREG (127 aa)) folds into the GST C-terminal domain. Residues 212–265 (GAREGGAKGQGRGCARPGREEAERAAAAADGAEEEDEAPREKKKPNPLDELPPS) are disordered. Gly residues predominate over residues 214–223 (REGGAKGQGR). The region spanning 255 to 411 (KPNPLDELPP…RPVLEGRVFK (157 aa)) is the EF-1-gamma C-terminal domain.

As to quaternary structure, EF-1 is composed of four subunits: alpha, beta, delta, and gamma.

Probably plays a role in anchoring the complex to other cellular components. In Trypanosoma cruzi, this protein is Elongation factor 1-gamma.